The chain runs to 350 residues: tRNA-splicing endonuclease (350 aa).

Residues Tyr-286, His-297, and Lys-328 contribute to the active site.

The protein belongs to the tRNA-intron endonuclease family. Archaeal long subfamily. Homodimer.

It carries out the reaction pretRNA = a 3'-half-tRNA molecule with a 5'-OH end + a 5'-half-tRNA molecule with a 2',3'-cyclic phosphate end + an intron with a 2',3'-cyclic phosphate and a 5'-hydroxyl terminus.. Functionally, endonuclease that removes tRNA introns. Cleaves pre-tRNA at the 5'- and 3'-splice sites to release the intron. The products are an intron and two tRNA half-molecules bearing 2',3' cyclic phosphate and 5'-OH termini. Recognizes a pseudosymmetric substrate in which 2 bulged loops of 3 bases are separated by a stem of 4 bp. This Methanosarcina acetivorans (strain ATCC 35395 / DSM 2834 / JCM 12185 / C2A) protein is tRNA-splicing endonuclease.